The chain runs to 322 residues: Anthranilate phosphoribosyltransferase (322 aa).

Residues glycine 71, 74–75, threonine 79, 81–84, 99–107, and alanine 111 each bind 5-phospho-alpha-D-ribose 1-diphosphate; these read GD, NVST, and KFGNRSASG. Anthranilate is bound at residue glycine 71. Residue serine 83 coordinates Mg(2+). Residue asparagine 102 participates in anthranilate binding. Arginine 157 is an anthranilate binding site. Mg(2+) contacts are provided by aspartate 215 and glutamate 216.

Belongs to the anthranilate phosphoribosyltransferase family. Homodimer. The cofactor is Mg(2+).

The enzyme catalyses N-(5-phospho-beta-D-ribosyl)anthranilate + diphosphate = 5-phospho-alpha-D-ribose 1-diphosphate + anthranilate. The protein operates within amino-acid biosynthesis; L-tryptophan biosynthesis; L-tryptophan from chorismate: step 2/5. In terms of biological role, catalyzes the transfer of the phosphoribosyl group of 5-phosphorylribose-1-pyrophosphate (PRPP) to anthranilate to yield N-(5'-phosphoribosyl)-anthranilate (PRA). The polypeptide is Anthranilate phosphoribosyltransferase (Thermoplasma acidophilum (strain ATCC 25905 / DSM 1728 / JCM 9062 / NBRC 15155 / AMRC-C165)).